The sequence spans 373 residues: tRNA-specific 2-thiouridylase MnmA (373 aa).

Residues 12–19 (GMSGGVDS) and methionine 38 each bind ATP. The interval 98 to 100 (NPD) is interaction with target base in tRNA. Residue cysteine 103 is the Nucleophile of the active site. Cysteine 103 and cysteine 200 are disulfide-bonded. Glycine 127 is an ATP binding site. The tract at residues 150-152 (KDQ) is interaction with tRNA. The active-site Cysteine persulfide intermediate is cysteine 200. Positions 312–313 (RY) are interaction with tRNA.

Belongs to the MnmA/TRMU family.

It localises to the cytoplasm. It catalyses the reaction S-sulfanyl-L-cysteinyl-[protein] + uridine(34) in tRNA + AH2 + ATP = 2-thiouridine(34) in tRNA + L-cysteinyl-[protein] + A + AMP + diphosphate + H(+). Its function is as follows. Catalyzes the 2-thiolation of uridine at the wobble position (U34) of tRNA, leading to the formation of s(2)U34. The chain is tRNA-specific 2-thiouridylase MnmA from Streptococcus thermophilus (strain CNRZ 1066).